A 285-amino-acid chain; its full sequence is MAGLGHPSAFGRATHAVVRAPPESLCRHALRRSQGEEVDFARAERQHELYVGVLGSKLGLQVVQLPADESLPDCVFVEDVAVVCEETALITRPGAPSRRKEVDMMKEALEKLQLNIVEMKDENATLDGGDVLFTGREFFVGLSKRTNQRGAEILADTFKDYAVSTVPVADSLHLKSFCSMAGPNLIAIGSSESAQKALKIMQQMSDHRYDKLTVPDDMAANCIYLNIPSKGHVLLHRTPEEYPESAKVYEKLKDHLLIPVSNSEMEKVDGLLTCCSVFINKKIDS.

A2 carries the post-translational modification N-acetylalanine. L30 is a binding site for substrate. Position 33 is a phosphoserine (S33). Substrate contacts are provided by D73, E78, D79, R98, and R145. The active-site Proton donor is the H173. The residue at position 222 (C222) is an S-nitrosocysteine. V268 is a binding site for substrate. The residue at position 274 (C274) is an S-nitrosocysteine. C274 acts as the Nucleophile in catalysis. C274 is a Zn(2+) binding site.

It belongs to the DDAH family. As to quaternary structure, monomer. In terms of tissue distribution, detected in skeletal muscle, lung, heart, liver, kidney and brain (at protein level).

The catalysed reaction is N(omega),N(omega)-dimethyl-L-arginine + H2O = dimethylamine + L-citrulline. The enzyme catalyses N(omega)-methyl-L-arginine + H2O = L-citrulline + methylamine. Its activity is regulated as follows. Inhibited by zinc ions. In terms of biological role, hydrolyzes N(G),N(G)-dimethyl-L-arginine (ADMA) and N(G)-monomethyl-L-arginine (MMA) which act as inhibitors of NOS. Has therefore a role in the regulation of nitric oxide generation. The sequence is that of N(G),N(G)-dimethylarginine dimethylaminohydrolase 1 (Ddah1) from Mus musculus (Mouse).